Here is a 210-residue protein sequence, read N- to C-terminus: Regulator of G-protein signaling 17 (210 aa).

A disordered region spans residues 1-21; sequence MRKRQQSQNEGTQAVSQAPGN. Residues 84–200 enclose the RGS domain; the sequence is NFDKMMKTPA…LNSQIYKAFV (117 aa). Position 137 is a phosphotyrosine (Tyr137).

Interacts with GNAI1 and GNAQ. Interacts with GNAZ and GNAI2. Interacts with OPRM1. Forms a complex with mu-opioid receptors and G(alpha)z/i2 subunits, including GNAZ and GNAI2; the formation of this complex results in mu-opioid receptor desensitization. Interacts with HINT1. In terms of processing, N- and O-glycosylated in synapsomal membranes. Serine phosphorylated in synapsomal membranes. Post-translationally, sumoylated with SUMO1 and SUM02 in synaptosomes. The sumoylated forms act as a scaffold for sequestering mu-opioid receptor-activated G(alpha) subunits. Desumoylated by HINT1. Detected in brain (at protein level). Highly expressed in the hypothalamus, periaqueductal gray matter, and pons-medulla. Lower levels in the thalamus, cortex and spinal cord. Weak expression in the striatum and cerebellum.

The protein localises to the membrane. Its subcellular location is the synapse. It is found in the synaptosome. The protein resides in the nucleus. It localises to the cytoplasm. Its function is as follows. Regulates G protein-coupled receptor signaling cascades, including signaling via muscarinic acetylcholine receptor CHRM2 and dopamine receptor DRD2. Inhibits signal transduction by increasing the GTPase activity of G protein alpha subunits, thereby driving them into their inactive GDP-bound form. Binds selectively to GNAZ and GNAI2 subunits, accelerates their GTPase activity and regulates their signaling activities. Negatively regulates mu-opioid receptor-mediated activation of the G-proteins. In Mus musculus (Mouse), this protein is Regulator of G-protein signaling 17 (Rgs17).